The primary structure comprises 190 residues: Threonylcarbamoyl-AMP synthase (190 aa).

Residues glycine 7–glycine 190 form the YrdC-like domain.

Belongs to the SUA5 family. TsaC subfamily.

The protein localises to the cytoplasm. It catalyses the reaction L-threonine + hydrogencarbonate + ATP = L-threonylcarbamoyladenylate + diphosphate + H2O. Required for the formation of a threonylcarbamoyl group on adenosine at position 37 (t(6)A37) in tRNAs that read codons beginning with adenine. Catalyzes the conversion of L-threonine, HCO(3)(-)/CO(2) and ATP to give threonylcarbamoyl-AMP (TC-AMP) as the acyladenylate intermediate, with the release of diphosphate. The chain is Threonylcarbamoyl-AMP synthase from Shigella boydii serotype 4 (strain Sb227).